A 381-amino-acid polypeptide reads, in one-letter code: MAEGKKTDDYTIQMDSIDQGNKSFEAPPPPQPRSPPSGSLSNNPILPVLAYCGSSILMTVMNKYVLSGTDFNLNFFLLCIQSLVCIIAIQTCKSCGLITYRDFSADEARKWFPITLLLIGMIYTGSKALQFLSIPVYTIFKNLTIILIAYGEVLWFGGSVTGLTLFSFGLMVLSSIIAAWADIKHAVESNGDATAKVSTLNAGYIWMLVNCLCTSSYVLGMRKRIKLTNFKDFDTMFYNNLLSIPVLIVLSAFLEDWSSTNVNRNFPPMDRNSIVFAMILSGLSSVFISYTSAWCVRVTSSTTYSMVGALNKLPIAISGLIFFDAPVTFPSVSAIVVGFVSGIVYAVAKIKQNAKPRTGVLPTANPPVSASSQSMRDSLRS.

Over Met-1–Pro-44 the chain is Cytoplasmic. Residues Gln-19–Ser-41 form a disordered region. Residues Ala-26–Pro-35 show a composition bias toward pro residues. The helical transmembrane segment at Ile-45 to Val-65 threads the bilayer. Topologically, residues Leu-66–Asp-70 are lumenal. The helical transmembrane segment at Phe-71–Thr-91 threads the bilayer. The Cytoplasmic portion of the chain corresponds to Cys-92–Arg-109. A helical membrane pass occupies residues Lys-110–Ser-126. Over Lys-127–Ser-133 the chain is Lumenal. A helical transmembrane segment spans residues Ile-134–Tyr-150. The Cytoplasmic portion of the chain corresponds to Gly-151–Ser-159. The helical transmembrane segment at Val-160–Ala-181 threads the bilayer. The Lumenal segment spans residues Asp-182–Thr-199. Residues Leu-200–Gly-220 traverse the membrane as a helical segment. Residues Met-221–Asp-234 lie on the Cytoplasmic side of the membrane. Residues Thr-235 to Glu-255 traverse the membrane as a helical segment. Residues Asp-256–Ser-273 are Lumenal-facing. A helical transmembrane segment spans residues Ile-274–Trp-294. The Cytoplasmic portion of the chain corresponds to Cys-295 to Thr-302. A helical transmembrane segment spans residues Thr-303–Phe-323. The Lumenal portion of the chain corresponds to Asp-324–Pro-326. Residues Val-327 to Val-347 form a helical membrane-spanning segment. At Ala-348–Ser-381 the chain is on the cytoplasmic side. Residues Thr-358–Ser-381 are disordered. The span at Pro-366–Ser-381 shows a compositional bias: polar residues.

It belongs to the TPT transporter family. SLC35D subfamily. As to quaternary structure, homooligomer.

It localises to the golgi apparatus membrane. It is found in the cytoplasmic vesicle membrane. The protein localises to the endoplasmic reticulum membrane. Involved in the import of GDP-mannose from the cytoplasm into the Golgi lumen. In Aspergillus niger (strain ATCC MYA-4892 / CBS 513.88 / FGSC A1513), this protein is GDP-mannose transporter (gmt1).